We begin with the raw amino-acid sequence, 475 residues long: Aspartyl/glutamyl-tRNA(Asn/Gln) amidotransferase subunit B (475 aa).

It belongs to the GatB/GatE family. GatB subfamily. As to quaternary structure, heterotrimer of A, B and C subunits.

It catalyses the reaction L-glutamyl-tRNA(Gln) + L-glutamine + ATP + H2O = L-glutaminyl-tRNA(Gln) + L-glutamate + ADP + phosphate + H(+). It carries out the reaction L-aspartyl-tRNA(Asn) + L-glutamine + ATP + H2O = L-asparaginyl-tRNA(Asn) + L-glutamate + ADP + phosphate + 2 H(+). Functionally, allows the formation of correctly charged Asn-tRNA(Asn) or Gln-tRNA(Gln) through the transamidation of misacylated Asp-tRNA(Asn) or Glu-tRNA(Gln) in organisms which lack either or both of asparaginyl-tRNA or glutaminyl-tRNA synthetases. The reaction takes place in the presence of glutamine and ATP through an activated phospho-Asp-tRNA(Asn) or phospho-Glu-tRNA(Gln). This is Aspartyl/glutamyl-tRNA(Asn/Gln) amidotransferase subunit B from Chlorobaculum tepidum (strain ATCC 49652 / DSM 12025 / NBRC 103806 / TLS) (Chlorobium tepidum).